The sequence spans 714 residues: Protein ESC8 (714 aa).

Disordered regions lie at residues 598 to 674 (APTG…ELHN) and 694 to 714 (RQLQ…RKGL). Over residues 610-624 (TSSQRRTTVHYSSDV) the composition is skewed to polar residues. Acidic residues predominate over residues 628–650 (VSEESENEVDIDVSDDYDSEYLS). Residues 654-674 (TLTRKGEDRTDKSFGKRELHN) show a composition bias toward basic and acidic residues. A compositionally biased stretch (basic residues) spans 704-714 (RSLRRNARKGL).

Interacts with GAL11 and SIR2.

It localises to the cytoplasm. The protein resides in the nucleus. Involved in HMR and telomere silencing via the recruitment or stabilizing of the SIR (silent information regulators) complex. This is Protein ESC8 (ESC8) from Saccharomyces cerevisiae (strain ATCC 204508 / S288c) (Baker's yeast).